Reading from the N-terminus, the 221-residue chain is Large ribosomal subunit protein uL3 (221 aa).

This sequence belongs to the universal ribosomal protein uL3 family. In terms of assembly, part of the 50S ribosomal subunit. Forms a cluster with proteins L14 and L19.

Functionally, one of the primary rRNA binding proteins, it binds directly near the 3'-end of the 23S rRNA, where it nucleates assembly of the 50S subunit. This chain is Large ribosomal subunit protein uL3, found in Chlamydia muridarum (strain MoPn / Nigg).